Here is a 164-residue protein sequence, read N- to C-terminus: 2-C-methyl-D-erythritol 2,4-cyclodiphosphate synthase (164 aa).

Positions 8 and 10 each coordinate a divalent metal cation. Residues Asp-8–His-10 and His-34–Ser-35 contribute to the 4-CDP-2-C-methyl-D-erythritol 2-phosphate site. His-42 provides a ligand contact to a divalent metal cation. Residues Asp-56–Gly-58, Thr-132–Glu-135, Phe-139, and Lys-142 each bind 4-CDP-2-C-methyl-D-erythritol 2-phosphate.

It belongs to the IspF family. As to quaternary structure, homotrimer. It depends on a divalent metal cation as a cofactor.

It catalyses the reaction 4-CDP-2-C-methyl-D-erythritol 2-phosphate = 2-C-methyl-D-erythritol 2,4-cyclic diphosphate + CMP. It participates in isoprenoid biosynthesis; isopentenyl diphosphate biosynthesis via DXP pathway; isopentenyl diphosphate from 1-deoxy-D-xylulose 5-phosphate: step 4/6. In terms of biological role, involved in the biosynthesis of isopentenyl diphosphate (IPP) and dimethylallyl diphosphate (DMAPP), two major building blocks of isoprenoid compounds. Catalyzes the conversion of 4-diphosphocytidyl-2-C-methyl-D-erythritol 2-phosphate (CDP-ME2P) to 2-C-methyl-D-erythritol 2,4-cyclodiphosphate (ME-CPP) with a corresponding release of cytidine 5-monophosphate (CMP). The sequence is that of 2-C-methyl-D-erythritol 2,4-cyclodiphosphate synthase from Clostridium kluyveri (strain NBRC 12016).